The following is a 532-amino-acid chain: Arginine--tRNA ligase (532 aa).

Residues Ala122 to Ser132 carry the 'HIGH' region motif.

Belongs to the class-I aminoacyl-tRNA synthetase family. In terms of assembly, monomer.

It localises to the cytoplasm. The catalysed reaction is tRNA(Arg) + L-arginine + ATP = L-arginyl-tRNA(Arg) + AMP + diphosphate. This is Arginine--tRNA ligase from Elusimicrobium minutum (strain Pei191).